Consider the following 148-residue polypeptide: [Ribosomal protein bS18]-alanine N-acetyltransferase (148 aa).

The N-acetyltransferase domain maps to 2-147; it reads NTISILSTTD…DAIIMALPIS (146 aa). Acetyl-CoA is bound by residues 69 to 71 and 77 to 82; these read IAV and RRGLGR. Glutamate 103 acts as the Proton acceptor in catalysis. Residue asparagine 108 participates in acetyl-CoA binding. The active-site Proton donor is the tyrosine 115.

Belongs to the acetyltransferase family. RimI subfamily.

Its subcellular location is the cytoplasm. It catalyses the reaction N-terminal L-alanyl-[ribosomal protein bS18] + acetyl-CoA = N-terminal N(alpha)-acetyl-L-alanyl-[ribosomal protein bS18] + CoA + H(+). Its function is as follows. Acetylates the N-terminal alanine of ribosomal protein bS18. This is [Ribosomal protein bS18]-alanine N-acetyltransferase from Salmonella typhimurium (strain LT2 / SGSC1412 / ATCC 700720).